A 533-amino-acid chain; its full sequence is Beta-1,4 N-acetylgalactosaminyltransferase 1 (533 aa).

The Cytoplasmic portion of the chain corresponds to 1–7 (MRLDRRA). The helical; Signal-anchor for type II membrane protein transmembrane segment at 8–25 (LYALVLLLACASLGLLYS) threads the bilayer. Over 26 to 533 (STRNAPSLPN…KHRLQCMTAE (508 aa)) the chain is Lumenal. N-linked (GlcNAc...) asparagine glycosylation is found at N79, N179, and N274. An intrachain disulfide couples C429 to C476.

Belongs to the glycosyltransferase 2 family. In terms of assembly, homodimer; disulfide-linked. Most abundant in brain, liver, lung, spleen and testis.

The protein localises to the golgi apparatus membrane. It catalyses the reaction a ganglioside GM3 (d18:1(4E)) + UDP-N-acetyl-alpha-D-galactosamine = a ganglioside GM2 (d18:1(4E)) + UDP + H(+). The catalysed reaction is a ganglioside GD3 (d18:1(4E)) + UDP-N-acetyl-alpha-D-galactosamine = a ganglioside GD2 (d18:1(4E)) + UDP + H(+). The enzyme catalyses a ganglioside GM3 + UDP-N-acetyl-alpha-D-galactosamine = a ganglioside GM2 + UDP + H(+). It carries out the reaction a ganglioside GD3 + UDP-N-acetyl-alpha-D-galactosamine = a ganglioside GD2 + UDP + H(+). It catalyses the reaction a ganglioside GD1a + UDP-N-acetyl-alpha-D-galactosamine = a ganglioside GalNAc-GD1a + UDP + H(+). The catalysed reaction is a ganglioside GT3 (d18:1(4E)) + UDP-N-acetyl-alpha-D-galactosamine = a ganglioside GT2 (d18:1(4E)) + UDP + H(+). The enzyme catalyses a beta-D-Gal-(1-&gt;4)-beta-D-Glc-(1&lt;-&gt;1)-Cer(d18:1(4E)) + UDP-N-acetyl-alpha-D-galactosamine = a ganglioside GA2 (d18:1(4E)) + UDP + H(+). It carries out the reaction a neolactoside IV(3)-alpha-NeuGc-nLc4Cer + UDP-N-acetyl-alpha-D-galactosamine = a neolactoside IV(4)-beta-GalNAc-IV(3)-alpha-NeuGc-nLc4Cer + UDP + H(+). It participates in sphingolipid metabolism. Its function is as follows. Involved in the biosynthesis of gangliosides GM2, GD2 and GA2. Functionally, involved in the biosynthesis of gangliosides GM2, GD2, GT2 and GA2 from GM3, GD3, GT3 and GA3, respectively. In Mus musculus (Mouse), this protein is Beta-1,4 N-acetylgalactosaminyltransferase 1.